The sequence spans 261 residues: U1 small nuclear ribonucleoprotein 70 kDa homolog (261 aa).

The 79-residue stretch at Lys-100–Gly-178 folds into the RRM domain. The segment at Gly-192–Asn-261 is disordered. A compositionally biased stretch (basic and acidic residues) spans Tyr-198–Ser-215. Over residues Gly-216 to Phe-235 the composition is skewed to gly residues.

As to quaternary structure, component of the spliceosome, where it is associated with snRNP U1. Associates with U1 snRNA.

The protein localises to the nucleus. In terms of biological role, involved in nuclear mRNA splicing. Essential for growth. The chain is U1 small nuclear ribonucleoprotein 70 kDa homolog from Schizosaccharomyces pombe (strain 972 / ATCC 24843) (Fission yeast).